A 176-amino-acid polypeptide reads, in one-letter code: Disulfide bond formation protein B (176 aa).

Residues 1 to 14 lie on the Cytoplasmic side of the membrane; it reads MLRFLNQCSQGRGA. Residues 15-31 form a helical membrane-spanning segment; that stretch reads WLLMAFTALALELTALW. Residues 32-49 lie on the Periplasmic side of the membrane; the sequence is FQHVMLLKPCVLCIYERC. Residues C41 and C44 are joined by a disulfide bond. A helical membrane pass occupies residues 50-65; sequence ALFGVLGAALIGAIAP. The Cytoplasmic portion of the chain corresponds to 66-71; sequence KTPLRY. Residues 72–89 traverse the membrane as a helical segment; it reads VAMVIWLYSAFRGVQLTY. Over 90–144 the chain is Periplasmic; it reads EHTMLQLYPSPFATCDFMVRFPEWLPLDKWVPQVFVASGDCAERQWDFLGLEMPQ. A disulfide bridge connects residues C104 and C130. A helical membrane pass occupies residues 145-163; that stretch reads WLLGIFIAYLIVAVLVMIS. Over 164–176 the chain is Cytoplasmic; sequence QPFKAKKRDLFGR.

It belongs to the DsbB family.

The protein resides in the cell inner membrane. Its function is as follows. Required for disulfide bond formation in some periplasmic proteins. Acts by oxidizing the DsbA protein. The sequence is that of Disulfide bond formation protein B from Shigella sonnei (strain Ss046).